The sequence spans 433 residues: Xylose isomerase (433 aa).

Active-site residues include histidine 99 and aspartate 102. Positions 230, 266, 269, 294, 305, 307, and 337 each coordinate Mg(2+).

This sequence belongs to the xylose isomerase family. As to quaternary structure, homotetramer. It depends on Mg(2+) as a cofactor.

Its subcellular location is the cytoplasm. It catalyses the reaction alpha-D-xylose = alpha-D-xylulofuranose. The sequence is that of Xylose isomerase from Cereibacter sphaeroides (strain ATCC 17025 / ATH 2.4.3) (Rhodobacter sphaeroides).